The chain runs to 101 residues: ATP-dependent Clp protease adapter protein ClpS (101 aa).

The protein belongs to the ClpS family. As to quaternary structure, binds to the N-terminal domain of the chaperone ClpA.

Functionally, involved in the modulation of the specificity of the ClpAP-mediated ATP-dependent protein degradation. This chain is ATP-dependent Clp protease adapter protein ClpS, found in Treponema denticola (strain ATCC 35405 / DSM 14222 / CIP 103919 / JCM 8153 / KCTC 15104).